A 275-amino-acid polypeptide reads, in one-letter code: 4-diphosphocytidyl-2-C-methyl-D-erythritol kinase (275 aa).

The active site involves Lys14. 98–108 (PMGAGLGGGSS) contacts ATP. Asp140 is a catalytic residue.

The protein belongs to the GHMP kinase family. IspE subfamily.

It catalyses the reaction 4-CDP-2-C-methyl-D-erythritol + ATP = 4-CDP-2-C-methyl-D-erythritol 2-phosphate + ADP + H(+). The protein operates within isoprenoid biosynthesis; isopentenyl diphosphate biosynthesis via DXP pathway; isopentenyl diphosphate from 1-deoxy-D-xylulose 5-phosphate: step 3/6. Its function is as follows. Catalyzes the phosphorylation of the position 2 hydroxy group of 4-diphosphocytidyl-2C-methyl-D-erythritol. The polypeptide is 4-diphosphocytidyl-2-C-methyl-D-erythritol kinase (Francisella philomiragia subsp. philomiragia (strain ATCC 25017 / CCUG 19701 / FSC 153 / O#319-036)).